A 33-amino-acid polypeptide reads, in one-letter code: Dolabellanin-B2 (33 aa).

Contains two disulfide bonds. Post-translationally, up to two of the methionines may be oxidized to methionine sulfoxides.

Its subcellular location is the secreted. Has antibacterial activity against Gram-negative bacteria E.coli JM109 and DH5-alpha, H.influenza IID 983, and V.vulnificus RIMD 2219009. Has antibacterial activity against Gram-positive bacteria S.aureus IID 1677, B.subtilis RIMD 0225014 and L.monocytogenes VIU206. Possesses antifungal activity against S.cerevisiae A581A, S.pombe IFO 1628, C.albicans ATCC 36232 and TIMM-1623, and C.tropicalis TIMM-0313. In Dolabella auricularia (Shoulderblade sea cat), this protein is Dolabellanin-B2.